A 230-amino-acid polypeptide reads, in one-letter code: Ribonuclease 3 (230 aa).

Residues 5-127 (HEHLARKLGI…ILGAVLRDQG (123 aa)) form the RNase III domain. E40 lines the Mg(2+) pocket. The active site involves D44. Mg(2+)-binding residues include D113 and E116. Residue E116 is part of the active site. Residues 154–224 (DPKTRLQELM…AENMLSRLSD (71 aa)) form the DRBM domain. The interval 202–230 (GEGSSRKKAEQQAAENMLSRLSDQSRFRV) is disordered.

The protein belongs to the ribonuclease III family. Homodimer. The cofactor is Mg(2+).

Its subcellular location is the cytoplasm. It catalyses the reaction Endonucleolytic cleavage to 5'-phosphomonoester.. Its function is as follows. Digests double-stranded RNA. Involved in the processing of primary rRNA transcript to yield the immediate precursors to the large and small rRNAs (23S and 16S). Processes some mRNAs, and tRNAs when they are encoded in the rRNA operon. Processes pre-crRNA and tracrRNA of type II CRISPR loci if present in the organism. The sequence is that of Ribonuclease 3 from Methylococcus capsulatus (strain ATCC 33009 / NCIMB 11132 / Bath).